The following is a 446-amino-acid chain: Glutamine synthetase (446 aa).

The region spanning 15 to 102 (RDIRFVRLWF…MFCDITMPDG (88 aa)) is the GS beta-grasp domain. The region spanning 109–446 (PRHVLRRQLT…PYELRTYLSL (338 aa)) is the GS catalytic domain. Glu-132 and Glu-134 together coordinate Mg(2+). Glu-184 serves as a coordination point for ATP. Mg(2+) is bound by residues Glu-189 and Glu-196. Gly-241 is a binding site for L-glutamate. His-245 is a Mg(2+) binding site. Residues 247–249 (HMS) and Ser-249 each bind ATP. Residues Arg-298, Glu-304, and Arg-316 each contribute to the L-glutamate site. ATP is bound by residues Arg-316 and Arg-321. Glu-336 provides a ligand contact to Mg(2+). Residue Arg-338 participates in L-glutamate binding.

This sequence belongs to the glutamine synthetase family. As to quaternary structure, oligomer of 12 subunits arranged in the form of two hexagons. In its feedback-inhibited form, interacts with TnrA in order to block its DNA-binding activity. It depends on Mg(2+) as a cofactor.

Its subcellular location is the cytoplasm. The enzyme catalyses L-glutamate + NH4(+) + ATP = L-glutamine + ADP + phosphate + H(+). Inhibited by glutamine. Glutamine synthetase (GS) is an unusual multitasking protein that functions as an enzyme, a transcription coregulator, and a chaperone in ammonium assimilation and in the regulation of genes involved in nitrogen metabolism. It catalyzes the ATP-dependent biosynthesis of glutamine from glutamate and ammonia. Feedback-inhibited GlnA also interacts with and regulates the activity of the transcriptional regulator TnrA. During nitrogen limitation, TnrA is in its DNA-binding active state and turns on the transcription of genes required for nitrogen assimilation. Under conditions of nitrogen excess, feedback-inhibited GlnA forms a stable complex with TnrA, which inhibits its DNA-binding activity. In contrast, feedback-inhibited GlnA acts as a chaperone to stabilize the DNA-binding activity of GlnR, which represses the transcription of nitrogen assimilation genes. The chain is Glutamine synthetase from Mycobacterium bovis (strain ATCC BAA-935 / AF2122/97).